The chain runs to 225 residues: PKHD-type hydroxylase YbiX (225 aa).

One can recognise a Fe2OG dioxygenase domain in the interval 78–177; that stretch reads TLSTPLFNRY…RVASFMWIQS (100 aa). Residues histidine 96, aspartate 98, and histidine 158 each coordinate Fe cation. Arginine 168 contributes to the 2-oxoglutarate binding site.

Requires Fe(2+) as cofactor. The cofactor is L-ascorbate.

The sequence is that of PKHD-type hydroxylase YbiX from Escherichia coli O45:K1 (strain S88 / ExPEC).